Consider the following 239-residue polypeptide: Protein NtpR (239 aa).

The 228-residue stretch at 12–239 (LIRATDTFQG…GLFDFFVQEF (228 aa)) folds into the Glutamine amidotransferase type-1 domain. Cys113 (nucleophile) is an active-site residue. Residues His217 and Glu219 contribute to the active site.

The protein is Protein NtpR (ntpR) of Enterococcus hirae (strain ATCC 9790 / DSM 20160 / JCM 8729 / LMG 6399 / NBRC 3181 / NCIMB 6459 / NCDO 1258 / NCTC 12367 / WDCM 00089 / R).